The chain runs to 178 residues: Single-stranded DNA-binding protein DdrB (178 aa).

The tract at residues 139-178 is disordered; it reads RYAVPGSNRPQAGAPARSAATRAQGARPGAVAVQDEETPF. Positions 147–165 are enriched in low complexity; that stretch reads RPQAGAPARSAATRAQGAR.

In terms of assembly, homopentamer; arranged in a ring-structure.

In terms of biological role, ssDNA-binding protein that probably contributes to the ionizing radiation resistance of D.geothermalis. Plays a role in DNA repair and genome reconstitution, in a RecA-independent process, and is necessary for recovery from severe genomic fragmentation as a result of exposure to severe levels of ionizing radiation. Binds single-stranded DNA but not duplex DNA. The polypeptide is Single-stranded DNA-binding protein DdrB (ddrB) (Deinococcus geothermalis (strain DSM 11300 / CIP 105573 / AG-3a)).